We begin with the raw amino-acid sequence, 436 residues long: Chaperone protein dnaJ 16 (436 aa).

The 66-residue stretch at 20-85 (DPYEVLGVLR…EKRRQFDSAG (66 aa)) folds into the J domain. A coiled-coil region spans residues 291–348 (TQEKEDLRSVEAQILTKRAELAKFETEYREVLVQFTDMTSRYAQEMQSIDELLKQRNE). The interval 360–416 (KRSSSKNRMRKSSFKKAAAKAPAPTEQEEEEEEEEEEEEESSRQKNKKPSTCDKSET) is disordered. Basic residues predominate over residues 362–377 (SSSKNRMRKSSFKKAA). Over residues 385–399 (EQEEEEEEEEEEEEE) the composition is skewed to acidic residues.

It belongs to the DnaJ family. B/II subfamily. As to expression, expressed constitutively in seedlings, roots, leaves, stems, flowers and siliques.

The protein resides in the membrane. In terms of biological role, plays a continuous role in plant development probably in the structural organization of compartments. Seems to not be involved in gravitropism signaling pathway. This chain is Chaperone protein dnaJ 16 (ATJ16), found in Arabidopsis thaliana (Mouse-ear cress).